The following is a 179-amino-acid chain: NADH-quinone oxidoreductase subunit I (179 aa).

4Fe-4S ferredoxin-type domains follow at residues 49-79 and 89-118; these read LTRDPDGEERCVACNLCAVACPVACISLQKG and EFFRINFSRCIFCGLCEEACPTSAIQLTPD. The [4Fe-4S] cluster site is built by Cys59, Cys62, Cys65, Cys69, Cys98, Cys101, Cys104, and Cys108.

It belongs to the complex I 23 kDa subunit family. As to quaternary structure, NDH-1 is composed of 14 different subunits. Subunits NuoA, H, J, K, L, M, N constitute the membrane sector of the complex. [4Fe-4S] cluster serves as cofactor.

Its subcellular location is the cell inner membrane. The enzyme catalyses a quinone + NADH + 5 H(+)(in) = a quinol + NAD(+) + 4 H(+)(out). NDH-1 shuttles electrons from NADH, via FMN and iron-sulfur (Fe-S) centers, to quinones in the respiratory chain. The immediate electron acceptor for the enzyme in this species is believed to be ubiquinone. Couples the redox reaction to proton translocation (for every two electrons transferred, four hydrogen ions are translocated across the cytoplasmic membrane), and thus conserves the redox energy in a proton gradient. The protein is NADH-quinone oxidoreductase subunit I of Chromohalobacter salexigens (strain ATCC BAA-138 / DSM 3043 / CIP 106854 / NCIMB 13768 / 1H11).